A 198-amino-acid polypeptide reads, in one-letter code: Superoxide dismutase [Mn], mitochondrial (198 aa).

Histidine 26 contacts Mn(2+). 3'-nitrotyrosine is present on tyrosine 34. An N6-acetyllysine; alternate mark is found at lysine 44 and lysine 51. N6-succinyllysine; alternate occurs at positions 44 and 51. Residue histidine 74 coordinates Mn(2+). Lysine 90 is modified (N6-acetyllysine). Lysine 98 and lysine 106 each carry N6-acetyllysine; alternate. Lysine 98 and lysine 106 each carry N6-succinyllysine; alternate. Residues aspartate 159 and histidine 163 each contribute to the Mn(2+) site. Lysine 178 carries the N6-acetyllysine modification.

It belongs to the iron/manganese superoxide dismutase family. In terms of assembly, homotetramer. Mn(2+) is required as a cofactor. Nitrated under oxidative stress. Nitration coupled with oxidation inhibits the catalytic activity. Post-translationally, acetylation at Lys-98 decreases enzymatic activity. Deacetylated by SIRT3 upon exposure to ionizing radiations or after long fasting. In terms of processing, polyubiquitinated; leading to proteasomal degradation. Deubiquitinated by USP36 which increases protein stability.

The protein localises to the mitochondrion matrix. It carries out the reaction 2 superoxide + 2 H(+) = H2O2 + O2. Its function is as follows. Destroys superoxide anion radicals which are normally produced within the cells and which are toxic to biological systems. The protein is Superoxide dismutase [Mn], mitochondrial (SOD2) of Hylobates lar (Lar gibbon).